The sequence spans 202 residues: MLKLTPRQAEILAFIKRCLEDNGYPPTRAEIAQELGFKSPNAAEEHLKALARKGAIEMTPGASRGIRIPGFEAKPDDSSLPIIGRVAAGAPILAEQHIEESCNINPAFFHPRADYLLRVHGMSMKDIGIFDGDLLAVHTTREARNGQVVVARIGDEVTVKRFKREGSKVWLIAENPEFAPIEVNLKDQDLVIEGLSVGVIRR.

Residues 28-48 (RAEIAQELGFKSPNAAEEHLK) constitute a DNA-binding region (H-T-H motif). Catalysis depends on for autocatalytic cleavage activity residues Ser123 and Lys160.

This sequence belongs to the peptidase S24 family. As to quaternary structure, homodimer.

It carries out the reaction Hydrolysis of Ala-|-Gly bond in repressor LexA.. In terms of biological role, represses a number of genes involved in the response to DNA damage (SOS response), including recA and lexA. In the presence of single-stranded DNA, RecA interacts with LexA causing an autocatalytic cleavage which disrupts the DNA-binding part of LexA, leading to derepression of the SOS regulon and eventually DNA repair. The chain is LexA repressor from Pseudomonas chlororaphis (Pseudomonas aureofaciens).